A 394-amino-acid polypeptide reads, in one-letter code: Magnesium transporter MRS2-2 (394 aa).

Residues 115–145 (PVGNASHNGGQGDGKEIAGAQNDGDTGDEDE) are disordered. Helical transmembrane passes span 329 to 349 (LVLS…GIFG) and 366 to 386 (YVVG…MSYA). The short motif at 349–351 (GMN) is the Required for magnesium transport activity element.

The protein belongs to the CorA metal ion transporter (MIT) (TC 1.A.35.5) family. Expressed in the whole plant but preferentially in the mature anthers.

The protein resides in the membrane. Low-affinity magnesium transporter that mediates the influx of magnesium. Plays a crucial role in male gametophyte development and male fertility. This chain is Magnesium transporter MRS2-2 (MRS2-2), found in Arabidopsis thaliana (Mouse-ear cress).